A 613-amino-acid polypeptide reads, in one-letter code: MTTLDSNNNTGGVITYIGSSGSSPNRTSPESLYSDSSNGSFQSLTQGCPTYFPPSPTGSLTQDPARSFGSIPPSLGDDGSPSSSSSSSSSSSSSFYNGSPPGGLQVALEDSNRVSPSKSTSNITKLNGMVLLCKVCGDVASGFHYGVHACEGCKGFFRRSIQQNIQYKRCLKNENCSIVRINRNRCQQCRFKKCLSVGMSRDAVRFGRIPKREKQRMLAEMQSAMNLANNQLSSQCPLETPPTQHPTPGPMGPSPPPAPAPSPLVGFSQFPQQLTPPRSPSPEPTVEDVISQVARAHREIFTYAHDKLGTSPGNFNANHASGNRPATTPHRWESQGCPPANDNIMAAQRHNEALNSLRQASSSYPPPWPPGAAHHSCHQPNSNGHRLCPTHVYPAPEGEAPVNSPRQGNSKNILLACPMNMYPHGRSGRTVQEIWEDFSMSFTPAVREVVEFAKHIPGFRDLSQHDQVTLLKAGTFEVLMVRFASLFNVKDQTVMFLSRTTYSLQELGAMGMGDLLNAMFDFSEKLNSLALTEEELGLFTAVVLVSADRSGMENSASVEQLQETLLRALRALVLKNRPSETSRFTKLLLKLPDLRTLNNMHSEKLLSFRVDAQ.

Residues 1 to 48 (MTTLDSNNNTGGVITYIGSSGSSPNRTSPESLYSDSSNGSFQSLTQGC) are compositionally biased toward polar residues. The interval 1 to 70 (MTTLDSNNNT…TQDPARSFGS (70 aa)) is required for phosphorylation by CSNK1E and cytoplasmic localization. The interval 1–102 (MTTLDSNNNT…SSFYNGSPPG (102 aa)) is disordered. A modulating region spans residues 1-129 (MTTLDSNNNT…TSNITKLNGM (129 aa)). A crucial for activation of GJA1 region spans residues 49 to 285 (PTYFPPSPTG…PPRSPSPEPT (237 aa)). Ser55 and Ser59 each carry phosphoserine; by GSK3-beta. A compositionally biased stretch (low complexity) spans 69–102 (GSIPPSLGDDGSPSSSSSSSSSSSSSFYNGSPPG). Positions 130-206 (VLLCKVCGDV…VGMSRDAVRF (77 aa)) form a DNA-binding region, nuclear receptor. 2 consecutive NR C4-type zinc fingers follow at residues 133 to 153 (CKVC…CEGC) and 170 to 194 (CLKN…FKKC). N6-acetyllysine; by KAT5 occurs at positions 192 and 193. The segment at 233–286 (SSQCPLETPPTQHPTPGPMGPSPPPAPAPSPLVGFSQFPQQLTPPRSPSPEPTV) is disordered. The segment covering 239–262 (ETPPTQHPTPGPMGPSPPPAPAPS) has biased composition (pro residues). Thr275 carries the post-translational modification Phosphothreonine; by CDK1. An NR LBD domain is found at 285-613 (TVEDVISQVA…KLLSFRVDAQ (329 aa)). Cys417 provides a ligand contact to heme. Lys590 bears the N6-acetyllysine mark. Residue His601 participates in heme binding.

The protein belongs to the nuclear hormone receptor family. NR1 subfamily. In terms of assembly, binds DNA as a monomer or a homodimer. Interacts with C1D, SP1 and ZNHIT1. Interacts with OPHN1 (via C-terminus). Interacts with PER2; the interaction associates PER2 to BMAL1 promoter region. Interacts with CRY1. Interacts with CCAR2. Interacts with NR2E3. Interacts with SIAH2. Interacts with FBXW7 and CDK1. Interacts with HUWE1. Interacts with NR0B2. Interacts with NFIL3. Interacts (via domain NR LBD) with HSP90AA1 and HSP90AB1. Ubiquitinated, leading to its proteasomal degradation. Ubiquitinated by the SCF(FBXW7) complex when phosphorylated by CDK1 leading to its proteasomal degradation. Ubiquitinated by SIAH2; leading to its proteasomal degradation. Rapidly ubiquitinated in response to inflammatory triggers and sumoylation is a prerequisite to its ubiquitination. Post-translationally, sumoylated by UBE2I, desumoylated by SENP1, and sumoylation is a prerequisite to its ubiquitination. In terms of processing, phosphorylated by CSNK1E; phosphorylation enhances its cytoplasmic localization. Undergoes lysosome-mediated degradation in a time-dependent manner in the liver. Expressed in all tissues and cell lines examined. Expressed at high levels in some squamous carcinoma cell lines.

The protein localises to the nucleus. Its subcellular location is the cytoplasm. It localises to the cell projection. It is found in the dendrite. The protein resides in the dendritic spine. Its function is as follows. Transcriptional repressor which coordinates circadian rhythm and metabolic pathways in a heme-dependent manner. Integral component of the complex transcription machinery that governs circadian rhythmicity and forms a critical negative limb of the circadian clock by directly repressing the expression of core clock components BMAL1, CLOCK and CRY1. Also regulates genes involved in metabolic functions, including lipid and bile acid metabolism, adipogenesis, gluconeogenesis and the macrophage inflammatory response. Acts as a receptor for heme which stimulates its interaction with the NCOR1/HDAC3 corepressor complex, enhancing transcriptional repression. Recognizes two classes of DNA response elements within the promoter of its target genes and can bind to DNA as either monomers or homodimers, depending on the nature of the response element. Binds as a monomer to a response element composed of the consensus half-site motif 5'-[A/G]GGTCA-3' preceded by an A/T-rich 5' sequence (RevRE), or as a homodimer to a direct repeat of the core motif spaced by two nucleotides (RevDR-2). Acts as a potent competitive repressor of ROR alpha (RORA) function and regulates the levels of its ligand heme by repressing the expression of PPARGC1A, a potent inducer of heme synthesis. Regulates lipid metabolism by repressing the expression of APOC3 and by influencing the activity of sterol response element binding proteins (SREBPs); represses INSIG2 which interferes with the proteolytic activation of SREBPs which in turn govern the rhythmic expression of enzymes with key functions in sterol and fatty acid synthesis. Regulates gluconeogenesis via repression of G6PC1 and PEPCK and adipocyte differentiation via repression of PPARG. Regulates glucagon release in pancreatic alpha-cells via the AMPK-NAMPT-SIRT1 pathway and the proliferation, glucose-induced insulin secretion and expression of key lipogenic genes in pancreatic-beta cells. Positively regulates bile acid synthesis by increasing hepatic expression of CYP7A1 via repression of NR0B2 and NFIL3 which are negative regulators of CYP7A1. Modulates skeletal muscle oxidative capacity by regulating mitochondrial biogenesis and autophagy; controls mitochondrial biogenesis and respiration by interfering with the STK11-PRKAA1/2-SIRT1-PPARGC1A signaling pathway. Represses the expression of SERPINE1/PAI1, an important modulator of cardiovascular disease and the expression of inflammatory cytokines and chemokines in macrophages. Represses gene expression at a distance in macrophages by inhibiting the transcription of enhancer-derived RNAs (eRNAs). Plays a role in the circadian regulation of body temperature and negatively regulates thermogenic transcriptional programs in brown adipose tissue (BAT); imposes a circadian oscillation in BAT activity, increasing body temperature when awake and depressing thermogenesis during sleep. In concert with NR2E3, regulates transcriptional networks critical for photoreceptor development and function. In addition to its activity as a repressor, can also act as a transcriptional activator. In the ovarian granulosa cells acts as a transcriptional activator of STAR which plays a role in steroid biosynthesis. In collaboration with SP1, activates GJA1 transcription in a heme-independent manner. Represses the transcription of CYP2B10, CYP4A10 and CYP4A14. Represses the transcription of CES2. Represses and regulates the circadian expression of TSHB in a NCOR1-dependent manner. Negatively regulates the protein stability of NR3C1 and influences the time-dependent subcellular distribution of NR3C1, thereby affecting its transcriptional regulatory activity. Plays a critical role in the circadian control of neutrophilic inflammation in the lung; under resting, non-stress conditions, acts as a rhythmic repressor to limit inflammatory activity whereas in the presence of inflammatory triggers undergoes ubiquitin-mediated degradation thereby relieving inhibition of the inflammatory response. Plays a key role in the circadian regulation of microglial activation and neuroinflammation; suppresses microglial activation through the NF-kappaB pathway in the central nervous system. Plays a role in the regulation of the diurnal rhythms of lipid and protein metabolism in the skeletal muscle via transcriptional repression of genes controlling lipid and amino acid metabolism in the muscle. The chain is Nuclear receptor subfamily 1 group D member 1 (NR1D1) from Bos taurus (Bovine).